The chain runs to 322 residues: MPTIQDERNLMVFSGNANKPLTQSICKELGVRMGKSLVSRFSDGEEQVEIEESVRRQEVFVVQPTCAPSAENLMELLVIIDALKRASVSSVTAVIPYFGYSRQDRRMRSLRVPITAKVAAKMISAIGADRVLTIDLHADQIQGFFDVPVDNVYASPLLLADIWRAYGTDNIIVVSPDVGGVVRARAMAKRLGDTDLAIIDKRRPRANVATVMNIIGEVNGKTCVLVDDLVDTAGTLCAAAVALKQNGATKVVAYITHPVLSGPAMDNINNSELDELVVTDTIPLSDAARECRKIRQLSVAELLAETIRRIAFGESVSSLYVD.

ATP contacts are provided by residues 43 to 45 and 102 to 103; these read DGE and RQ. Mg(2+) contacts are provided by His-137 and Asp-177. Lys-201 is an active-site residue. Residues Arg-203, Asp-227, and 231–235 contribute to the D-ribose 5-phosphate site; that span reads DTAGT.

This sequence belongs to the ribose-phosphate pyrophosphokinase family. Class I subfamily. As to quaternary structure, homohexamer. The cofactor is Mg(2+).

Its subcellular location is the cytoplasm. The catalysed reaction is D-ribose 5-phosphate + ATP = 5-phospho-alpha-D-ribose 1-diphosphate + AMP + H(+). Its pathway is metabolic intermediate biosynthesis; 5-phospho-alpha-D-ribose 1-diphosphate biosynthesis; 5-phospho-alpha-D-ribose 1-diphosphate from D-ribose 5-phosphate (route I): step 1/1. Its function is as follows. Involved in the biosynthesis of the central metabolite phospho-alpha-D-ribosyl-1-pyrophosphate (PRPP) via the transfer of pyrophosphoryl group from ATP to 1-hydroxyl of ribose-5-phosphate (Rib-5-P). The sequence is that of Ribose-phosphate pyrophosphokinase from Xylella fastidiosa (strain Temecula1 / ATCC 700964).